The sequence spans 387 residues: DNA-damage-repair/toleration protein 111 (387 aa).

Positions 1-213 (MLGGLYGDLP…TSGLGVGAGG (213 aa)) are disordered. The segment covering 19 to 29 (SGNSSSVWSSS) has biased composition (low complexity). Positions 103–158 (DPARPNDYEEYKREKKRKATEAEMKREMDKRRQEDEERDKREREEREKERERDNSD) are enriched in basic and acidic residues. The region spanning 214–260 (QMTAAQRMMAKMGWKQGQGLGKSEQGITTPLMAKKTDRRAGVIVNAS) is the G-patch domain. One can recognise an RRM domain in the interval 283–369 (RVLLLRNMVG…RTVRATFYDE (87 aa)).

In terms of assembly, component of the SWAP1-SFPS-RRC1 splicing factor complex which modulates pre-mRNA splicing to promote photomorphogenesis. Interacts with SWAP1 in a light-independent manner. Associates with the photoreceptor phytochrome B (phyB) in nuclear photobodies upon response to red light. Binds to the splicing factor 1 SF1, involved in 3' splicing site recognition. In terms of tissue distribution, expressed ubiquitously with highest levels in dry seeds and in cells surrounding the base of trichomes and guard cells.

The protein localises to the nucleus. Its subcellular location is the nucleus speckle. As a member of the SWAP1-SFPS-RRC1 splicing factor complex, modulates photomorphogenesis by regulating the gene expression and pre-messenger RNA (mRNA) alternative splicing of a large number of genes, including those involved in plant responses to light signaling, probably by helping in the 3' splice site determination. Associates with and regulates EARLY FLOWERING 3 (ELF3) mRNA processing, a key component of the circadian clock also involved in photomorphogenesis. Required for light-regulated (red, far-red and blue lights) photomorphogenesis in a PHYB- and PHYTOCHROME INTERACTING FACTORS- (PIFs) dependent manner. Promotes flowering under both short (SD) and long days (LD). Controls abscisic acid (ABA) sensitivity during seed development, stomatal responsiveness and germination by monitoring ABI3 splicing, upstream of the splicing factor SUPPRESSOR OF ABI3-ABI5. Seems to be involved in the resistance to UV light and chemical DNA-damaging agents. The sequence is that of DNA-damage-repair/toleration protein 111 from Arabidopsis thaliana (Mouse-ear cress).